The following is a 359-amino-acid chain: Ribosomal RNA small subunit methyltransferase mra1 (359 aa).

Basic residues predominate over residues 1-10 (MPTYSKRKSR). Disordered regions lie at residues 1 to 62 (MPTY…EDEE) and 98 to 118 (VKSDEEKEDPNGASSKTVKAR). Ser-12 is modified (phosphoserine). Residues 18–39 (KTNQPKFIKRSQSSETITSGET) are compositionally biased toward polar residues. Thr-33 is subject to Phosphothreonine. Residue Ser-100 is modified to Phosphoserine. S-adenosyl-L-methionine-binding positions include Leu-287, Gly-314, 319-321 (GPD), and 334-339 (ISDYPL).

This sequence belongs to the class IV-like SAM-binding methyltransferase superfamily. RNA methyltransferase NEP1 family. In terms of assembly, homodimer.

The protein localises to the nucleus. It localises to the nucleolus. It catalyses the reaction a pseudouridine in rRNA + S-adenosyl-L-methionine = an N(1)-methylpseudouridine in rRNA + S-adenosyl-L-homocysteine + H(+). Its function is as follows. S-adenosyl-L-methionine-dependent pseudouridine N(1)-methyltransferase that methylates the pseudouridine corresponding to position 1189 (Psi1189) in S.cerevisiae 18S rRNA. Involved the biosynthesis of the hypermodified N1-methyl-N3-(3-amino-3-carboxypropyl) pseudouridine (m1acp3-Psi) conserved in eukaryotic 18S rRNA. Also has an essential role in 40S ribosomal subunit biogenesis independent on its methyltransferase activity, facilitating the incorporation of ribosomal protein S19 during the formation of pre-ribosomes. Essential for cell growth. It also has a key role in promoting the mating function. The chain is Ribosomal RNA small subunit methyltransferase mra1 from Schizosaccharomyces pombe (strain 972 / ATCC 24843) (Fission yeast).